Reading from the N-terminus, the 251-residue chain is MQIHLLIVDALNLIRRIHAVQGSPSVNACQHALQQLISHSQPTHAVAVFDEDDRSDSWRHQSLPDYKAGRSPMSDNLQQEMPLIREAFNSLGVNCWSSPGNEADDLAATLAVKIGGAGHQVTIVSTDKGYCQLLAPNVQIRDYFQKRWLDMPFVKQEFGVLPHQLPDYWGLAGISSSKIPGVAGIGAKTAALLLQQASSLEQLYQELDSVPEKWRKKLQQHQEMAFICKQIATLKTDLPLSGNLQQLRLNR.

Residues 51-72 (EDDRSDSWRHQSLPDYKAGRSP) form a disordered region. A Mg(2+)-binding site is contributed by D104. Residues 160-249 (VLPHQLPDYW…LSGNLQQLRL (90 aa)) form the 5'-3' exonuclease domain. Residues L171, A172, P180, V182, and I185 each coordinate K(+). The interval 184–189 (GIGAKT) is interaction with DNA.

Belongs to the Xni family. Requires Mg(2+) as cofactor. K(+) serves as cofactor.

Functionally, has flap endonuclease activity. During DNA replication, flap endonucleases cleave the 5'-overhanging flap structure that is generated by displacement synthesis when DNA polymerase encounters the 5'-end of a downstream Okazaki fragment. This is Flap endonuclease Xni from Yersinia enterocolitica serotype O:8 / biotype 1B (strain NCTC 13174 / 8081).